The sequence spans 109 residues: Large ribosomal subunit protein uL22 (109 aa).

It belongs to the universal ribosomal protein uL22 family. Part of the 50S ribosomal subunit.

This protein binds specifically to 23S rRNA; its binding is stimulated by other ribosomal proteins, e.g. L4, L17, and L20. It is important during the early stages of 50S assembly. It makes multiple contacts with different domains of the 23S rRNA in the assembled 50S subunit and ribosome. In terms of biological role, the globular domain of the protein is located near the polypeptide exit tunnel on the outside of the subunit, while an extended beta-hairpin is found that lines the wall of the exit tunnel in the center of the 70S ribosome. This Laribacter hongkongensis (strain HLHK9) protein is Large ribosomal subunit protein uL22.